Consider the following 177-residue polypeptide: Large ribosomal subunit protein uL6 (177 aa).

This sequence belongs to the universal ribosomal protein uL6 family. Part of the 50S ribosomal subunit.

Its function is as follows. This protein binds to the 23S rRNA, and is important in its secondary structure. It is located near the subunit interface in the base of the L7/L12 stalk, and near the tRNA binding site of the peptidyltransferase center. In Aromatoleum aromaticum (strain DSM 19018 / LMG 30748 / EbN1) (Azoarcus sp. (strain EbN1)), this protein is Large ribosomal subunit protein uL6.